The chain runs to 131 residues: Small ribosomal subunit protein bS6 (131 aa).

The segment at 96 to 131 (VTEASPMAKAKDERDSRRGPAGDRSYDEANAEEIAE) is disordered. Basic and acidic residues predominate over residues 104 to 122 (KAKDERDSRRGPAGDRSYD).

Belongs to the bacterial ribosomal protein bS6 family.

Its function is as follows. Binds together with bS18 to 16S ribosomal RNA. The protein is Small ribosomal subunit protein bS6 of Shewanella sp. (strain MR-4).